We begin with the raw amino-acid sequence, 270 residues long: tRNA pseudouridine synthase A (270 aa).

The active-site Nucleophile is the Asp-60. A substrate-binding site is contributed by Tyr-118.

The protein belongs to the tRNA pseudouridine synthase TruA family. In terms of assembly, homodimer.

The enzyme catalyses uridine(38/39/40) in tRNA = pseudouridine(38/39/40) in tRNA. Functionally, formation of pseudouridine at positions 38, 39 and 40 in the anticodon stem and loop of transfer RNAs. The chain is tRNA pseudouridine synthase A from Salmonella agona (strain SL483).